The primary structure comprises 93 residues: Large ribosomal subunit protein uL23 (93 aa).

The protein belongs to the universal ribosomal protein uL23 family. In terms of assembly, part of the 50S ribosomal subunit. Contacts protein L29, and trigger factor when it is bound to the ribosome.

Functionally, one of the early assembly proteins it binds 23S rRNA. One of the proteins that surrounds the polypeptide exit tunnel on the outside of the ribosome. Forms the main docking site for trigger factor binding to the ribosome. In Campylobacter lari (strain RM2100 / D67 / ATCC BAA-1060), this protein is Large ribosomal subunit protein uL23.